The sequence spans 81 residues: uncharacterized protein (81 aa).

The N-terminal stretch at 1 to 20 (MIDDHEALLLLVLSSGPAAL) is a signal peptide.

This is an uncharacterized protein from Treponema pallidum (strain Nichols).